The sequence spans 309 residues: Xylose/arabinose import permease protein XacI (309 aa).

6 consecutive transmembrane segments (helical) span residues 29-49, 89-109, 121-141, 170-190, 227-247, and 282-302; these read LVVF…MTAI, LIMS…AAYG, MLML…VPLA, ELVP…TILF, MFGV…LFAF, and AAFL…EQFA. The 213-residue stretch at 85 to 297 folds into the ABC transmembrane type-1 domain; that stretch reads FFNSLIMSIP…VPTLILYVAF (213 aa).

Belongs to the binding-protein-dependent transport system permease family. In terms of assembly, the complex is composed of two ATP-binding proteins (XacJ and XacK), two transmembrane proteins (XacH and XacI) and a solute-binding protein (XacG).

Its subcellular location is the cell membrane. Functionally, part of the ABC transporter complex XacGHIJK involved in the uptake of xylose and arabinose. Responsible for the translocation of the substrate across the membrane. The sequence is that of Xylose/arabinose import permease protein XacI from Haloferax volcanii (strain ATCC 29605 / DSM 3757 / JCM 8879 / NBRC 14742 / NCIMB 2012 / VKM B-1768 / DS2) (Halobacterium volcanii).